Consider the following 94-residue polypeptide: uncharacterized protein (94 aa).

Residues Met1 to Ser23 are disordered.

This is an uncharacterized protein from Homo sapiens (Human).